The following is a 513-amino-acid chain: Glutamate--tRNA ligase 2 (513 aa).

The short motif at 11-21 (PSPTGFLHIGS) is the 'HIGH' region element. Residues 240–244 (KLSKR) carry the 'KMSKS' region motif. An ATP-binding site is contributed by K243. Residues 335 to 383 (NTLLRHLPYREEFGGNTERSTAAYIDIREDASTGLTYKLPLAVELPKKF) enclose the RPE1 insert domain.

This sequence belongs to the class-I aminoacyl-tRNA synthetase family. Glutamate--tRNA ligase type 1 subfamily. As to quaternary structure, monomer.

It is found in the cytoplasm. The enzyme catalyses tRNA(Glu) + L-glutamate + ATP = L-glutamyl-tRNA(Glu) + AMP + diphosphate. Catalyzes the attachment of glutamate to tRNA(Glu) in a two-step reaction: glutamate is first activated by ATP to form Glu-AMP and then transferred to the acceptor end of tRNA(Glu). The polypeptide is Glutamate--tRNA ligase 2 (Rickettsia conorii (strain ATCC VR-613 / Malish 7)).